Here is a 586-residue protein sequence, read N- to C-terminus: Asparagine synthetase [glutamine-hydrolyzing] (586 aa).

The active-site For GATase activity is cysteine 2. One can recognise a Glutamine amidotransferase type-2 domain in the interval 2–185 (CGILAVLGCS…PGHLYSSKSG (184 aa)). L-glutamine is bound by residues 50–54 (RLAII), 75–77 (NGE), and aspartate 98. Positions 194-517 (PPWFNESVPS…PQNSARLTVP (324 aa)) constitute an Asparagine synthetase domain. ATP-binding positions include leucine 232, valine 268, and 342–343 (SG).

It belongs to the asparagine synthetase family.

The catalysed reaction is L-aspartate + L-glutamine + ATP + H2O = L-asparagine + L-glutamate + AMP + diphosphate + H(+). Its pathway is amino-acid biosynthesis; L-asparagine biosynthesis; L-asparagine from L-aspartate (L-Gln route): step 1/1. The chain is Asparagine synthetase [glutamine-hydrolyzing] from Brassica oleracea (Wild cabbage).